Reading from the N-terminus, the 426-residue chain is Phytoene synthase 3, chloroplastic (426 aa).

The N-terminal 52 residues, 1–52 (MMSTSRAVKSPACAARRRQWSADAPNRTATFLACRHGRRLGGGGGAPCSVRA), are a transit peptide targeting the chloroplast.

It belongs to the phytoene/squalene synthase family. As to expression, expressed in roots and endosperm.

Its subcellular location is the plastid. It is found in the chloroplast. The protein resides in the plastoglobule. It catalyses the reaction 2 (2E,6E,10E)-geranylgeranyl diphosphate = 15-cis-phytoene + 2 diphosphate. Its function is as follows. Catalyzes the conversion of geranylgeranyl diphosphate to phytoene. Mediates the first committed step in carotenoid biosynthesis. May play a role in regulating carotenoid flux in response to abiotic stress in roots. May control flux to carotenoid precursors that are required for abiotic stress-induced abscisic acid (ABA) formation in roots. The polypeptide is Phytoene synthase 3, chloroplastic (Zea mays (Maize)).